The following is a 731-amino-acid chain: Elongation factor 2 (731 aa).

In terms of domain architecture, tr-type G spans 19-260; that stretch reads KHIRNIGIVA…MVVHHLPNPL (242 aa). GTP is bound by residues 28–35, 94–98, and 148–151; these read AHIDHGKT, DTPGH, and NKVD. At H597 the chain carries Diphthamide.

It belongs to the TRAFAC class translation factor GTPase superfamily. Classic translation factor GTPase family. EF-G/EF-2 subfamily.

It is found in the cytoplasm. Its function is as follows. Catalyzes the GTP-dependent ribosomal translocation step during translation elongation. During this step, the ribosome changes from the pre-translocational (PRE) to the post-translocational (POST) state as the newly formed A-site-bound peptidyl-tRNA and P-site-bound deacylated tRNA move to the P and E sites, respectively. Catalyzes the coordinated movement of the two tRNA molecules, the mRNA and conformational changes in the ribosome. The chain is Elongation factor 2 from Methanoregula boonei (strain DSM 21154 / JCM 14090 / 6A8).